The following is a 57-amino-acid chain: Conotoxin reg3.17 (57 aa).

The N-terminal stretch at 1–16 (TICLLLFPLTVVPLDG) is a signal peptide. Residues 17–44 (DQPAHQPAVRKHNIKSAVQLRQWDEEQQ) constitute a propeptide that is removed on maturation. Intrachain disulfides connect C45-C57, C46-C53, and C50-C56.

Belongs to the conotoxin M superfamily. Expressed by the venom duct.

It is found in the secreted. The chain is Conotoxin reg3.17 from Conus regius (Crown cone).